The following is a 345-amino-acid chain: UPF0324 membrane protein CTC_01844 (345 aa).

The next 10 helical transmembrane spans lie at 7 to 24 (YSVGILFTAVLAVISGFI), 28 to 50 (IPYRLIGAGVFALLIGMFLNPIV), 70 to 87 (LAIILMGITLSFSQVLEV), 91 to 113 (SLIVMVFTLITAFGGGYLLGKLF), 120 to 142 (SGLISAGTGICGGSAIAAISPVI), 152 to 174 (AISATFIFDVIMVILFPIAGKYF), 181 to 203 (YGLWAGTAVNDTSSVVAAGYAFS), 209 to 231 (FSVIVKLTRTLSIVPVVLIFSYI), 261 to 283 (IFPWFILLFLVMVAIKSTGIIPN), and 316 to 338 (SGFAPAVHGFIISLLVVVVSFLV).

This sequence belongs to the UPF0324 family.

It is found in the cell membrane. The protein is UPF0324 membrane protein CTC_01844 of Clostridium tetani (strain Massachusetts / E88).